A 404-amino-acid chain; its full sequence is Magnesium transporter NIPA4 (404 aa).

Residues 1–55 (MELRVSNTSCENGSLLHLYCSSQEVLCQIVNDLSPEVPSNATFHSWQERIRQNYG) are Extracellular-facing. Asparagine 7, asparagine 12, and asparagine 40 each carry an N-linked (GlcNAc...) asparagine glycan. The chain crosses the membrane as a helical span at residues 56 to 76 (FYIGLGLAFLSSFLIGSSVIL). Topologically, residues 77 to 102 (KKKGLLRLVATGATRAVDGGFGYLKD) are cytoplasmic. A helical membrane pass occupies residues 103–123 (AMWWAGFLTMAAGEVANFGAY). Position 124 (alanine 124) is a topological domain, extracellular. A helical membrane pass occupies residues 125-145 (FAPATVVTPLGALSVLISAIL). Topologically, residues 146–153 (SSYFLRES) are cytoplasmic. The chain crosses the membrane as a helical span at residues 154-174 (LNLLGKLGCVICVAGSTVMVI). The Extracellular segment spans residues 175–195 (HAPEEEKVTTIMEMASKMKDT). Residues 196-216 (GFIVFAVLLLVSCLILIFVIA) traverse the membrane as a helical segment. At 217–223 (PRYGQRN) the chain is on the cytoplasmic side. The chain crosses the membrane as a helical span at residues 224–244 (ILIYIIICSVIGAFSVAAVKG). The Extracellular portion of the chain corresponds to 245 to 261 (LGITIKNFFQGLPVVRH). Residues 262–282 (PLPYILSLILALSLSTQVNFL) traverse the membrane as a helical segment. The Cytoplasmic portion of the chain corresponds to 283 to 293 (NRALDIFNTSL). A helical membrane pass occupies residues 294-314 (VFPIYYVFFTTVVVTSSIILF). The Extracellular segment spans residues 315–324 (KEWYSMSAVD). A helical membrane pass occupies residues 325 to 345 (IAGTLSGFVTIILGVFMLHAF). Topologically, residues 346 to 404 (KDLDISCASLPHMHKNPPPSPAPEPTVIRLEDKNVLVDNIELASTSSPEEKPKVFIIHS) are cytoplasmic.

It belongs to the NIPA family. As to expression, highly expressed in brain, lung, stomach, keratinocytes and leukocytes, and in all other tissues tested except liver, thyroid and fetal brain.

It localises to the cell membrane. The enzyme catalyses Mg(2+)(in) = Mg(2+)(out). Its function is as follows. Acts as a Mg(2+) transporter. Can also transport other divalent cations such as Ba(2+), Sr(2+) and Fe(2+) but to a much less extent than Mg(2+). May be a receptor for ligands (trioxilins A3 and B3) from the hepoxilin pathway. This is Magnesium transporter NIPA4 (NIPAL4) from Homo sapiens (Human).